A 164-amino-acid chain; its full sequence is Choriogonadotropin subunit beta (164 aa).

The signal sequence occupies residues 1 to 20 (MEMLQGLLLCLLLSTGGAWA). Cystine bridges form between Cys29/Cys77, Cys43/Cys92, Cys46/Cys130, Cys54/Cys108, Cys58/Cys110, and Cys113/Cys120. The N-linked (GlcNAc...) asparagine glycan is linked to Asn50. The tract at residues 133 to 164 (HTSQDSSSKDPPRNLTSPSQLPEPADAPLVPQ) is disordered. Residue Ser140 is glycosylated (O-linked (GalNAc...) serine). A glycan (N-linked (GlcNAc...) asparagine) is linked at Asn146. Ser151 is a glycosylation site (O-linked (GalNAc...) serine).

This sequence belongs to the glycoprotein hormones subunit beta family. In terms of assembly, heterodimer of a common alpha chain and a unique beta chain which confers biological specificity to thyrotropin, lutropin, follitropin and gonadotropin.

Its subcellular location is the secreted. Stimulates the ovaries to synthesize the steroids that are essential for the maintenance of pregnancy. The polypeptide is Choriogonadotropin subunit beta (CGB) (Aotus nancymaae (Ma's night monkey)).